Consider the following 454-residue polypeptide: Alkaline extracellular protease (454 aa).

The signal sequence occupies residues 1 to 15 (MKLATAFTILTAVLA). Positions 16–157 (APLAAPAPAP…EIPASSNAKR (142 aa)) are excised as a propeptide. Residues 68–146 (FIVVFDSSAT…TVEPDTIVSL (79 aa)) enclose the Inhibitor I9 domain. N-linked (GlcNAc...) asparagine glycosylation occurs at Asn123. Residues 166–454 (QWGLSRISHK…NAVAYNGVGI (289 aa)) enclose the Peptidase S8 domain. Active-site charge relay system residues include Asp200, His231, and Ser397.

It belongs to the peptidase S8 family. Post-translationally, the pro-region is removed through cleavage by XPR6 after Lys156-Arg157, which yields mature active XPR2. The 10 consecutive -X-Ala- or -X-Pro- dipeptides located over 100 amino acids upstream of the N-terminal of mature XPR2 are subject to dipeptidyl aminopeptidase (DPAPase)-processing. DPAPase activity is not necessary for XPR6 cleavage and for secretion of mature active XPR2. In terms of processing, N-glycosylated. Glycosylation within the pro-region has no effect on secretion and maturation at 18 degrees Celsius, but is required for secretion at 28 degrees Celsius.

The protein resides in the secreted. It carries out the reaction Hydrolysis of proteins with broad specificity for peptide bonds, and a preference for a large uncharged residue in P1. Hydrolyzes peptide amides.. The protease activity is completely inhibited by the serine inhibitor PMSF but is not affected by thiol group inhibitors and in the presence of dithiothreitol. In the presence of high concentrations of o-phenanthroline the protease activity is only partially inhibited. The pro-region plays an inhibitory role and may provide a mechanism for preventing premature activation in the secretory pathway. Major secreted protein that belongs to the subtilisin family serine proteases. The chain is Alkaline extracellular protease from Yarrowia lipolytica (strain CLIB 122 / E 150) (Yeast).